A 595-amino-acid chain; its full sequence is Putative lipase atg15 (595 aa).

At 1-20 (MKGLRGHNKKSFWGNTRLSD) the chain is on the cytoplasmic side. The helical; Signal-anchor for type II membrane protein transmembrane segment at 21–41 (LLWPVTLLPGLISAYQPVYLG) threads the bilayer. The Lumenal portion of the chain corresponds to 42–595 (SRQSSPFLPP…TTTGKHLGRF (554 aa)). Residues Asn164, Asn199, Asn221, Asn279, and Asn303 are each glycosylated (N-linked (GlcNAc...) asparagine). Ser319 serves as the catalytic Charge relay system. Asn465 is a glycosylation site (N-linked (GlcNAc...) asparagine).

The protein belongs to the AB hydrolase superfamily. Lipase family. As to quaternary structure, binds to both phosphatidylinositol (PI) and phosphatidylinositol 3,5-bisphosphate (PIP2).

The protein localises to the endosome. It localises to the multivesicular body membrane. It is found in the prevacuolar compartment membrane. It catalyses the reaction a triacylglycerol + H2O = a diacylglycerol + a fatty acid + H(+). Functionally, lipase which is essential for lysis of subvacuolar cytoplasm to vacuole targeted bodies and intravacuolar autophagic bodies. Involved in the lysis of intravacuolar multivesicular body (MVB) vesicles. The intravacuolar membrane disintegration by atg15 is critical to life span extension. In Aspergillus niger (strain ATCC MYA-4892 / CBS 513.88 / FGSC A1513), this protein is Putative lipase atg15 (atg15).